A 199-amino-acid chain; its full sequence is Protein OPI10 homolog (199 aa).

This sequence belongs to the OPI10 family.

This is Protein OPI10 homolog from Aedes aegypti (Yellowfever mosquito).